Reading from the N-terminus, the 505-residue chain is DDB1- and CUL4-associated factor 17 (505 aa).

2 helical membrane-spanning segments follow: residues 186–206 and 222–242; these read VLLY…ILEI and GILI…QAII.

In terms of assembly, interacts with DDB1, CUL4A and CUL4B.

It localises to the membrane. The protein resides in the nucleus. Its subcellular location is the nucleolus. The protein operates within protein modification; protein ubiquitination. Its function is as follows. May function as a substrate receptor for CUL4-DDB1 E3 ubiquitin-protein ligase complex. The polypeptide is DDB1- and CUL4-associated factor 17 (Dcaf17) (Rattus norvegicus (Rat)).